The following is a 340-amino-acid chain: MPGNTKKSADSGLTAKDYYFDSYSHWGIHEEMLKDDVRTLSYRDAIMQNPHLFRDKIVLDVGCGTGILSMFCARAGAKHVYGVDMSEIIHKAVQIVEVNKLSDRITLIQGKMEEIQLPVEKVDIIVSEWMGYFLLYESMLDTVLVARDRYLAPDGLLFPDRAQIQLAAIEDADYKSEKIGFWDDVYGFDFSPIKKDVWKEPLVDTVDRIAVNTNSCVILDLDLKTVKKEDLAFSSPFEITATRNDFVHAFLAWFDIEFSACHKPIKFSTGPFSRYTHWKQTVFYTHKDLTVKAGEYIRGTITCKPAEGNHRELDIDISYTFNPREPNREPVSEDLSYRMC.

The region spanning K16 to R311 is the SAM-dependent MTase PRMT-type domain. Y19 carries the post-translational modification Phosphotyrosine. 5 residues coordinate S-adenosyl-L-methionine: H29, R38, G62, D84, and E113. Catalysis depends on residues E128 and E137. At S176 the chain carries Phosphoserine.

The protein belongs to the class I-like SAM-binding methyltransferase superfamily. Protein arginine N-methyltransferase family. Interacts with pab2.

The protein resides in the nucleus. The catalysed reaction is L-arginyl-[protein] + S-adenosyl-L-methionine = N(omega)-methyl-L-arginyl-[protein] + S-adenosyl-L-homocysteine + H(+). It carries out the reaction L-arginyl-[protein] + 2 S-adenosyl-L-methionine = N(omega),N(omega)-dimethyl-L-arginyl-[protein] + 2 S-adenosyl-L-homocysteine + 2 H(+). Its function is as follows. S-adenosyl-L-methionine-dependent protein-arginine N-methyltransferase that catalyzes both the mono- and asymmetric (type I) dimethylation of the guanidino nitrogens of arginine residues in target proteins. Asymmetrically dimethylates the polyadenylate-binding protein pab2, modulating pab2 oligomerization. This is Protein arginine N-methyltransferase 1 from Schizosaccharomyces pombe (strain 972 / ATCC 24843) (Fission yeast).